Consider the following 374-residue polypeptide: Flagellar P-ring protein 1 (374 aa).

Residues 1–26 form the signal peptide; sequence MVPNLMVIKKHLIGLLLILCPLSLQA.

The protein belongs to the FlgI family. As to quaternary structure, the basal body constitutes a major portion of the flagellar organelle and consists of four rings (L,P,S, and M) mounted on a central rod.

The protein resides in the periplasm. Its subcellular location is the bacterial flagellum basal body. Its function is as follows. Assembles around the rod to form the L-ring and probably protects the motor/basal body from shearing forces during rotation. This Photobacterium profundum (strain SS9) protein is Flagellar P-ring protein 1.